Reading from the N-terminus, the 358-residue chain is 3-isopropylmalate dehydrogenase (358 aa).

NAD(+) is bound at residue 76–89 (GPRWDNLTGAERPE). The substrate site is built by Arg96, Arg106, Arg135, and Asp225. Positions 225, 249, and 253 each coordinate Mg(2+). NAD(+) is bound at residue 283–295 (GSAPDIAGQNKAN).

The protein belongs to the isocitrate and isopropylmalate dehydrogenases family. LeuB type 1 subfamily. As to quaternary structure, homodimer. Mg(2+) is required as a cofactor. Requires Mn(2+) as cofactor.

The protein resides in the cytoplasm. The enzyme catalyses (2R,3S)-3-isopropylmalate + NAD(+) = 4-methyl-2-oxopentanoate + CO2 + NADH. It participates in amino-acid biosynthesis; L-leucine biosynthesis; L-leucine from 3-methyl-2-oxobutanoate: step 3/4. Its function is as follows. Catalyzes the oxidation of 3-carboxy-2-hydroxy-4-methylpentanoate (3-isopropylmalate) to 3-carboxy-4-methyl-2-oxopentanoate. The product decarboxylates to 4-methyl-2 oxopentanoate. The chain is 3-isopropylmalate dehydrogenase from Oleidesulfovibrio alaskensis (strain ATCC BAA-1058 / DSM 17464 / G20) (Desulfovibrio alaskensis).